Reading from the N-terminus, the 137-residue chain is uncharacterized protein (137 aa).

The segment at 1–26 is disordered; the sequence is MKDKMWCEDTAQPHRRLPAPPSSSSP.

This is an uncharacterized protein from Homo sapiens (Human).